The chain runs to 417 residues: Phosphoglycerate kinase 2 (417 aa).

14 residues coordinate (2R)-3-phosphoglycerate: valine 23, aspartate 24, phenylalanine 25, asparagine 26, asparagine 38, arginine 39, serine 62, histidine 63, glycine 65, arginine 66, leucine 121, arginine 122, histidine 168, and arginine 169. Residue glycine 212 participates in ADP binding. A CDP-binding site is contributed by glycine 212. Alanine 213 and lysine 214 together coordinate AMP. ATP is bound at residue alanine 213. Position 213 (alanine 213) interacts with Mg(2+). Position 217 (aspartate 217) interacts with CDP. Aspartate 217 contacts Mg(2+). Lysine 218 is an AMP binding site. Residue lysine 218 participates in ATP binding. Glycine 236 provides a ligand contact to ADP. Residue glycine 236 participates in CDP binding. The AMP site is built by glycine 237 and glycine 312. Residues glycine 237 and glycine 312 each contribute to the ATP site. Residues glycine 337 and phenylalanine 342 each contribute to the CDP site. Phenylalanine 342 is an ADP binding site. Glutamate 343 serves as a coordination point for AMP. Positions 343, 374, and 375 each coordinate ATP. Mg(2+) is bound at residue aspartate 374.

Belongs to the phosphoglycerate kinase family. In terms of assembly, monomer. It depends on Mg(2+) as a cofactor.

Its subcellular location is the cytoplasm. It localises to the mitochondrion. It carries out the reaction (2R)-3-phosphoglycerate + ATP = (2R)-3-phospho-glyceroyl phosphate + ADP. The protein operates within carbohydrate degradation; glycolysis; pyruvate from D-glyceraldehyde 3-phosphate: step 2/5. Its function is as follows. Catalyzes one of the two ATP producing reactions in the glycolytic pathway via the reversible conversion of 1,3-diphosphoglycerate to 3-phosphoglycerate. Both L- and D- forms of purine and pyrimidine nucleotides can be used as substrates, but the activity is much lower on pyrimidines. Negatively regulates the biosynthesis of acetyl-CoA from pyruvate in the mitochondrion. The chain is Phosphoglycerate kinase 2 (PGK2) from Rhizopus niveus.